The following is a 232-amino-acid chain: Ribonuclease 3 (232 aa).

The region spanning 5 to 134 (NDAISKIIDY…LIGAIYIDGG (130 aa)) is the RNase III domain. Position 47 (glutamate 47) interacts with Mg(2+). Aspartate 51 is an active-site residue. Residues asparagine 120 and glutamate 123 each contribute to the Mg(2+) site. Glutamate 123 is a catalytic residue. One can recognise a DRBM domain in the interval 159-228 (DPKTSLQEWT…AELMLEKIGK (70 aa)).

The protein belongs to the ribonuclease III family. Homodimer. Mg(2+) serves as cofactor.

It localises to the cytoplasm. It carries out the reaction Endonucleolytic cleavage to 5'-phosphomonoester.. Functionally, digests double-stranded RNA. Involved in the processing of primary rRNA transcript to yield the immediate precursors to the large and small rRNAs (23S and 16S). Processes some mRNAs, and tRNAs when they are encoded in the rRNA operon. Processes pre-crRNA and tracrRNA of type II CRISPR loci if present in the organism. The chain is Ribonuclease 3 from Wolbachia pipientis wMel.